The chain runs to 329 residues: Ribosomal RNA small subunit methyltransferase H (329 aa).

S-adenosyl-L-methionine contacts are provided by residues 46 to 48, D65, F92, D113, and H120; that span reads GGH. The disordered stretch occupies residues 295 to 329; the sequence is RGAERPSPAEVAANPRAASARLRAAEKIRDTREAA. Residues 317–329 show a composition bias toward basic and acidic residues; the sequence is RAAEKIRDTREAA.

The protein belongs to the methyltransferase superfamily. RsmH family.

It is found in the cytoplasm. It carries out the reaction cytidine(1402) in 16S rRNA + S-adenosyl-L-methionine = N(4)-methylcytidine(1402) in 16S rRNA + S-adenosyl-L-homocysteine + H(+). Its function is as follows. Specifically methylates the N4 position of cytidine in position 1402 (C1402) of 16S rRNA. This chain is Ribosomal RNA small subunit methyltransferase H, found in Acidothermus cellulolyticus (strain ATCC 43068 / DSM 8971 / 11B).